The primary structure comprises 256 residues: tRNA (guanine-N(7)-)-methyltransferase (256 aa).

Positions 85, 110, 137, and 159 each coordinate S-adenosyl-L-methionine. D159 is a catalytic residue. Residues K163 and D195 each coordinate substrate.

The protein belongs to the class I-like SAM-binding methyltransferase superfamily. TrmB family.

The enzyme catalyses guanosine(46) in tRNA + S-adenosyl-L-methionine = N(7)-methylguanosine(46) in tRNA + S-adenosyl-L-homocysteine. The protein operates within tRNA modification; N(7)-methylguanine-tRNA biosynthesis. In terms of biological role, catalyzes the formation of N(7)-methylguanine at position 46 (m7G46) in tRNA. This is tRNA (guanine-N(7)-)-methyltransferase from Rhodopseudomonas palustris (strain HaA2).